Consider the following 459-residue polypeptide: UDP-N-acetylmuramate--L-alanine ligase (459 aa).

113–119 (GSHGKTT) contributes to the ATP binding site.

It belongs to the MurCDEF family.

Its subcellular location is the cytoplasm. The catalysed reaction is UDP-N-acetyl-alpha-D-muramate + L-alanine + ATP = UDP-N-acetyl-alpha-D-muramoyl-L-alanine + ADP + phosphate + H(+). It participates in cell wall biogenesis; peptidoglycan biosynthesis. In terms of biological role, cell wall formation. This Persephonella marina (strain DSM 14350 / EX-H1) protein is UDP-N-acetylmuramate--L-alanine ligase.